Here is a 416-residue protein sequence, read N- to C-terminus: Phosphoglycerate kinase (416 aa).

Ser-2 carries the N-acetylserine modification. Val-23, Asp-24, Phe-25, Asn-26, Gln-38, Arg-39, Ser-62, His-63, Gly-65, and Arg-66 together coordinate (2R)-3-phosphoglycerate. Lys-82 participates in a covalent cross-link: Glycyl lysine isopeptide (Lys-Gly) (interchain with G-Cter in ubiquitin). Thr-93 carries the phosphothreonine modification. A Phosphoserine modification is found at Ser-110. (2R)-3-phosphoglycerate contacts are provided by Leu-121 and Arg-122. Phosphoserine occurs at positions 130 and 154. 2 residues coordinate (2R)-3-phosphoglycerate: His-168 and Arg-169. Ser-172 carries the post-translational modification Phosphoserine. A Glycyl lysine isopeptide (Lys-Gly) (interchain with G-Cter in ubiquitin) cross-link involves residue Lys-197. At Thr-203 the chain carries Phosphothreonine. Gly-212 contacts ADP. A CDP-binding site is contributed by Gly-212. Residues Ala-213 and Lys-214 each coordinate AMP. The ATP site is built by Ala-213 and Lys-214. Residue Ala-213 participates in Mg(2+) binding. Mg(2+) is bound by residues Ala-216 and Asp-217. Residue Asp-217 coordinates CDP. Lys-218 is a binding site for AMP. Residue Lys-218 coordinates ATP. Position 236 (Gly-236) interacts with ADP. Gly-236 contributes to the CDP binding site. Gly-237 serves as a coordination point for AMP. Residue Gly-237 coordinates ATP. Thr-241 is subject to Phosphothreonine. Residues Lys-258 and Lys-274 each participate in a glycyl lysine isopeptide (Lys-Gly) (interchain with G-Cter in ubiquitin) cross-link. A Phosphothreonine modification is found at Thr-298. A Glycyl lysine isopeptide (Lys-Gly) (interchain with G-Cter in ubiquitin) cross-link involves residue Lys-302. Residue Gly-311 coordinates AMP. Residues Gly-311 and Leu-312 each contribute to the ATP site. Ser-318 bears the Phosphoserine mark. Position 331 is a phosphothreonine (Thr-331). Asn-335 serves as a coordination point for ATP. Residues Gly-336 and Phe-341 each contribute to the CDP site. Phe-341 provides a ligand contact to ADP. Glu-342 serves as a coordination point for AMP. Glu-342 lines the ATP pocket. (2R)-3-phosphoglycerate is bound at residue Gly-371. 2 residues coordinate ATP: Asp-373 and Thr-374. Asp-373 lines the Mg(2+) pocket. Thr-392 carries the post-translational modification Phosphothreonine. (2R)-3-phosphoglycerate is bound by residues Gly-394 and Gly-395.

This sequence belongs to the phosphoglycerate kinase family. Monomer. The cofactor is Mg(2+).

The protein resides in the cytoplasm. It localises to the mitochondrion. It carries out the reaction (2R)-3-phosphoglycerate + ATP = (2R)-3-phospho-glyceroyl phosphate + ADP. The protein operates within carbohydrate degradation; glycolysis; pyruvate from D-glyceraldehyde 3-phosphate: step 2/5. Functionally, catalyzes one of the two ATP producing reactions in the glycolytic pathway via the reversible conversion of 1,3-diphosphoglycerate to 3-phosphoglycerate. Both L- and D- forms of purine and pyrimidine nucleotides can be used as substrates, but the activity is much lower on pyrimidines. Negatively regulates the biosynthesis of acetyl-CoA from pyruvate in the mitochondrion. This is Phosphoglycerate kinase (PGK1) from Saccharomyces cerevisiae (strain ATCC 204508 / S288c) (Baker's yeast).